Here is a 288-residue protein sequence, read N- to C-terminus: Cytochrome b-c1 complex catalytic subunit, mitochondrial (288 aa).

Residues 12-34 (SMVQKFIAGGVGVTGLTASYLLY) form a helical membrane-spanning segment. Residues 69 to 222 (ASIRRGFQVY…DLVEYEDGTP (154 aa)) form the Cytochrome c domain. Heme c-binding residues include Cys-82, Cys-85, and His-86. Positions 111–121 (EELEYDDEPDD) are enriched in acidic residues. The tract at residues 111–138 (EELEYDDEPDDEGKPRKRPGKLADYIPG) is disordered. The helical transmembrane segment at 250–268 (WGLKALVVLSSLYLLSIWV) threads the bilayer.

It belongs to the cytochrome c family. Component of the ubiquinol-cytochrome c oxidoreductase (cytochrome b-c1 complex, complex III, CIII), a multisubunit enzyme composed of 10 subunits. The complex is composed of 3 respiratory subunits cytochrome b (COB), cytochrome c1 (CYT1) and Rieske protein (RIP1), 2 core protein subunits COR1 and QCR2, and 5 low-molecular weight protein subunits QCR6, QCR7, QCR8, QCR9 and QCR10. The complex exists as an obligatory dimer and forms supercomplexes (SCs) in the inner mitochondrial membrane with a monomer or a dimer of cytochrome c oxidase (complex IV, CIV), resulting in 2 different assemblies (supercomplexes III(2)IV and III(2)IV(2)). Heme c is required as a cofactor.

The protein localises to the mitochondrion inner membrane. The catalysed reaction is a quinol + 2 Fe(III)-[cytochrome c](out) = a quinone + 2 Fe(II)-[cytochrome c](out) + 2 H(+)(out). Component of the ubiquinol-cytochrome c oxidoreductase, a multisubunit transmembrane complex that is part of the mitochondrial electron transport chain which drives oxidative phosphorylation. The complex plays an important role in the uptake of multiple carbon sources present in different host niches. In Candida albicans (strain SC5314 / ATCC MYA-2876) (Yeast), this protein is Cytochrome b-c1 complex catalytic subunit, mitochondrial.